The sequence spans 468 residues: Ribulose bisphosphate carboxylase large chain (468 aa).

Lys5 carries the N6,N6,N6-trimethyllysine modification. Residues Asn114 and Thr164 each coordinate substrate. The active-site Proton acceptor is the Lys166. Position 168 (Lys168) interacts with substrate. Mg(2+) contacts are provided by Lys192, Asp194, and Glu195. Lys192 is modified (N6-carboxylysine). His285 (proton acceptor) is an active-site residue. 3 residues coordinate substrate: Arg286, His318, and Ser370.

This sequence belongs to the RuBisCO large chain family. Type I subfamily. As to quaternary structure, heterohexadecamer of 8 large chains and 8 small chains; disulfide-linked. The disulfide link is formed within the large subunit homodimers. Mg(2+) is required as a cofactor. The disulfide bond which can form in the large chain dimeric partners within the hexadecamer appears to be associated with oxidative stress and protein turnover.

It localises to the plastid. Its subcellular location is the chloroplast. The catalysed reaction is 2 (2R)-3-phosphoglycerate + 2 H(+) = D-ribulose 1,5-bisphosphate + CO2 + H2O. The enzyme catalyses D-ribulose 1,5-bisphosphate + O2 = 2-phosphoglycolate + (2R)-3-phosphoglycerate + 2 H(+). Functionally, ruBisCO catalyzes two reactions: the carboxylation of D-ribulose 1,5-bisphosphate, the primary event in carbon dioxide fixation, as well as the oxidative fragmentation of the pentose substrate in the photorespiration process. Both reactions occur simultaneously and in competition at the same active site. The protein is Ribulose bisphosphate carboxylase large chain of Nolana spathulata (Chilean bell flower).